A 317-amino-acid chain; its full sequence is Methionyl-tRNA formyltransferase (317 aa).

112-115 (SLLP) contributes to the (6S)-5,6,7,8-tetrahydrofolate binding site.

Belongs to the Fmt family.

It carries out the reaction L-methionyl-tRNA(fMet) + (6R)-10-formyltetrahydrofolate = N-formyl-L-methionyl-tRNA(fMet) + (6S)-5,6,7,8-tetrahydrofolate + H(+). Functionally, attaches a formyl group to the free amino group of methionyl-tRNA(fMet). The formyl group appears to play a dual role in the initiator identity of N-formylmethionyl-tRNA by promoting its recognition by IF2 and preventing the misappropriation of this tRNA by the elongation apparatus. In Histophilus somni (strain 129Pt) (Haemophilus somnus), this protein is Methionyl-tRNA formyltransferase.